The sequence spans 419 residues: CDP-diacylglycerol--serine O-phosphatidyltransferase 3 (419 aa).

The interval 1 to 51 is disordered; the sequence is MPVRRRWYPPSSTAAQPSPDGGDVNTDDADACPSSRQQRPPSLPQHSAPIH. Positions 33 to 47 are enriched in low complexity; the sequence is PSSRQQRPPSLPQHS. The next 7 helical transmembrane spans lie at 103-123, 142-162, 168-188, 260-280, 287-307, 359-379, and 384-404; these read PHTV…SGVL, WAMI…TILI, VWRL…FLLF, LLLW…RHML, WWDS…WAGM, FIQV…TFFL, and WIPP…LIAI.

This sequence belongs to the CDP-alcohol phosphatidyltransferase class-I family.

It is found in the endoplasmic reticulum membrane. It carries out the reaction a CDP-1,2-diacyl-sn-glycerol + L-serine = a 1,2-diacyl-sn-glycero-3-phospho-L-serine + CMP + H(+). Its pathway is phospholipid metabolism; phosphatidylethanolamine biosynthesis; phosphatidylethanolamine from CDP-diacylglycerol: step 1/2. Catalyzes a base-exchange reaction in which the polar head group of phosphatidylethanolamine (PE) or phosphatidylcholine (PC) is replaced by L-serine. This is CDP-diacylglycerol--serine O-phosphatidyltransferase 3 (PSS3) from Oryza sativa subsp. japonica (Rice).